We begin with the raw amino-acid sequence, 241 residues long: tRNA pseudouridine synthase B (241 aa).

The active-site Nucleophile is the Asp-52.

The protein belongs to the pseudouridine synthase TruB family. Type 1 subfamily.

It catalyses the reaction uridine(55) in tRNA = pseudouridine(55) in tRNA. Its function is as follows. Responsible for synthesis of pseudouridine from uracil-55 in the psi GC loop of transfer RNAs. This is tRNA pseudouridine synthase B from Chloroherpeton thalassium (strain ATCC 35110 / GB-78).